We begin with the raw amino-acid sequence, 165 residues long: Probable chemoreceptor glutamine deamidase CheD (165 aa).

Belongs to the CheD family.

It carries out the reaction L-glutaminyl-[protein] + H2O = L-glutamyl-[protein] + NH4(+). Its function is as follows. Probably deamidates glutamine residues to glutamate on methyl-accepting chemotaxis receptors (MCPs), playing an important role in chemotaxis. In Clostridium tetani (strain Massachusetts / E88), this protein is Probable chemoreceptor glutamine deamidase CheD.